A 644-amino-acid chain; its full sequence is Kelch-like protein 34 (644 aa).

The BTB domain maps to 29–96 (CDVTLETEGS…IYTAWLSLSM (68 aa)). In terms of domain architecture, BACK spans 131–238 (CCFAANVAAR…PADVLRRVYS (108 aa)). Residues 304-329 (AARGQVAAPEPEEEEEELEEEEEEEE) are disordered. Acidic residues predominate over residues 313–329 (EPEEEEEELEEEEEEEE). Kelch repeat units follow at residues 320–366 (ELEE…TAGN), 367–425 (FLFV…AVGE), 426–473 (RLLA…VGDR), 475–526 (VVYI…VLRG), 528–571 (VFAF…VVEE), and 573–623 (ALLL…VLQL).

This chain is Kelch-like protein 34 (KLHL34), found in Homo sapiens (Human).